The sequence spans 164 residues: Peptidyl-prolyl cis-trans isomerase A-like 4F (164 aa).

Positions 7–163 constitute a PPIase cyclophilin-type domain; the sequence is FFEITRDGKP…KKITIADCGQ (157 aa).

Belongs to the cyclophilin-type PPIase family. PPIase A subfamily.

It localises to the cytoplasm. The enzyme catalyses [protein]-peptidylproline (omega=180) = [protein]-peptidylproline (omega=0). PPIases accelerate the folding of proteins. It catalyzes the cis-trans isomerization of proline imidic peptide bonds in oligopeptides. This is Peptidyl-prolyl cis-trans isomerase A-like 4F from Homo sapiens (Human).